Here is a 470-residue protein sequence, read N- to C-terminus: FLYWCH transcription factor 2 (470 aa).

The interval 102–148 (SQLISEDTRPSASSSPSSTATAVSNSGQSNATSTSSSSTEPEYKPRN) is disordered. The segment covering 111–140 (PSASSSPSSTATAVSNSGQSNATSTSSSST) has biased composition (low complexity). The FLYWCH-type zinc finger occupies 145-204 (KPRNVREKVYADGYIMSFDKKSCCGTKEFWRCERKNDCNARMHSDINTREIVRKLHPHNH).

Probable transcription factor. May bind to the promoters of target genes, including micro-RNA genes, in order to repress expression, and acting redundantly with flh-1 and flh-3. The protein is FLYWCH transcription factor 2 of Caenorhabditis elegans.